A 496-amino-acid chain; its full sequence is Solute carrier family 2, facilitated glucose transporter member 3 (496 aa).

Topologically, residues 1 to 10 are cytoplasmic; the sequence is MGTQKVTPAL. A helical membrane pass occupies residues 11–32; that stretch reads IFAITVATIGSFQFGYNTGVIN. Topologically, residues 33–64 are extracellular; sequence APEKIIKEFINKTLTDKGNAPPSEVLLTSLWS. N-linked (GlcNAc...) asparagine glycosylation is present at Asn-43. A helical membrane pass occupies residues 65 to 85; sequence LSVAIFSVGGMIGSFSVGLFV. The Cytoplasmic segment spans residues 86–90; sequence NRFGR. A helical membrane pass occupies residues 91 to 111; that stretch reads RNSMLIVNLLAVTGGCFMGLC. At 112 to 118 the chain is on the extracellular side; sequence KVAKSVE. Residues 119-142 form a helical membrane-spanning segment; that stretch reads MLILGRLIIGLFCGLCTGFVPMYI. At 143-153 the chain is on the cytoplasmic side; the sequence is GEISPTALRGA. The helical transmembrane segment at 154–174 threads the bilayer; that stretch reads FGTLNQLGIVVGILVAQIFGL. Gln-159 is a binding site for D-glucose. Residues 175 to 183 are Extracellular-facing; that stretch reads EFILGSEEL. The chain crosses the membrane as a helical span at residues 184–204; the sequence is WPLLLGFTILPTILQSAALPF. At 205–269 the chain is on the cytoplasmic side; the sequence is CPESPRFLLI…LFRVSSYRQP (65 aa). Thr-232 carries the phosphothreonine modification. The chain crosses the membrane as a helical span at residues 270–290; that stretch reads IIISIVLQLSQQLSGINAVFY. The tract at residues 277–279 is important for selectivity against fructose; that stretch reads QLS. D-glucose is bound by residues 280–281 and Asn-286; that span reads QQ. Topologically, residues 291–304 are extracellular; it reads YSTGIFKDAGVQEP. Residues 305-325 form a helical membrane-spanning segment; the sequence is IYATIGAGVVNTIFTVVSLFL. Position 315 (Asn-315) interacts with D-glucose. Over 326–331 the chain is Cytoplasmic; that stretch reads VERAGR. The helical transmembrane segment at 332 to 352 threads the bilayer; sequence RTLHMIGLGGMAFCSTLMTVS. Residues 353–363 lie on the Extracellular side of the membrane; the sequence is LLLKDNYNGMS. The chain crosses the membrane as a helical span at residues 364-389; it reads FVCIGAILVFVAFFEIGPGPIPWFIV. D-glucose is bound by residues Glu-378 and Trp-386. The Cytoplasmic segment spans residues 390 to 399; that stretch reads AELFSQGPRP. A helical membrane pass occupies residues 400–420; that stretch reads AAMAVAGCSNWTSNFLVGLLF. Over 421–429 the chain is Extracellular; the sequence is PSAAHYLGA. The helical transmembrane segment at 430–450 threads the bilayer; the sequence is YVFIIFTGFLITFLAFTFFKV. Over 451 to 496 the chain is Cytoplasmic; it reads PETRGRTFEDITRAFEGQAHGADRSGKDGVMEVNSIEPAKETTTNV. Phosphoserine occurs at positions 475 and 485. Residue Thr-492 is modified to Phosphothreonine.

Belongs to the major facilitator superfamily. Sugar transporter (TC 2.A.1.1) family. Glucose transporter subfamily. Interacts with SMIM43; the interaction may promote SLC2A3-mediated glucose transport to meet the energy needs of mesendoderm differentiation.

The protein localises to the cell membrane. It localises to the perikaryon. It is found in the cell projection. It carries out the reaction D-glucose(out) = D-glucose(in). It catalyses the reaction D-galactose(in) = D-galactose(out). Deoxyglucose transport is inhibited by D-glucose, D-galactose and maltose. Galactose transport is inhibited by D-glucose and maltose. Functionally, facilitative glucose transporter. Can also mediate the uptake of various other monosaccharides across the cell membrane. Mediates the uptake of glucose, 2-deoxyglucose, galactose, mannose, xylose and fucose, and probably also dehydroascorbate. Does not mediate fructose transport. Required for mesendoderm differentiation. The polypeptide is Solute carrier family 2, facilitated glucose transporter member 3 (Pongo abelii (Sumatran orangutan)).